A 507-amino-acid chain; its full sequence is (6-4) photolyase (507 aa).

Residues 9–10 (GD), 32–40 (CEVMAEASY), and G105 each bind 6,7-dimethyl-8-(1-D-ribityl)lumazine. Residues 265 to 269 (HSLLS) and N273 contribute to the FAD site. C350 is a [4Fe-4S] cluster binding site. Residues 363–366 (YAHH), D397, and N406 contribute to the FAD site. Residues C438, C441, and C454 each coordinate [4Fe-4S] cluster.

Belongs to the iron-sulfur bacterial cryptochrome/photolyase (FeS-BCP) family. Requires FAD as cofactor. It depends on 6,7-dimethyl-8-(1-D-ribityl)lumazine as a cofactor. [4Fe-4S] cluster is required as a cofactor.

It catalyses the reaction (6-4) photoproduct (in DNA) = 2 pyrimidine residues (in DNA).. Photolyase involved in the repair of UV-induced (6-4) lesions in DNA. Catalyzes the photoreactivation of (6-4) pyrimidine-pyrimidone photoproducts by using blue-light energy. Can repair (6-4) photoproducts in ssDNA as well as in dsDNA. The protein is (6-4) photolyase of Agrobacterium fabrum (strain C58 / ATCC 33970) (Agrobacterium tumefaciens (strain C58)).